Here is a 357-residue protein sequence, read N- to C-terminus: Neurogenic differentiation factor 1 (357 aa).

The interval 1–94 is disordered; the sequence is MTKSYSESGL…GPKKKKMTKA (94 aa). A compositionally biased stretch (acidic residues) spans 58–78; the sequence is EEEEEDEDLEEEEEEEEEEED. Positions 81-93 are enriched in basic residues; that stretch reads PKRRGPKKKKMTK. The Nuclear localization signal signature appears at 87-93; it reads KKKKMTK. The bHLH domain occupies 101–153; the sequence is LRRMKANARERNRMHGLNAALDNLRKVVPCYSKTQKLSKIETLRLAKNYIWAL. Phosphoserine is present on residues Ser162, Ser259, Ser266, and Ser274. Ser336 is modified (phosphoserine; by CaMK2).

As to quaternary structure, efficient DNA-binding requires dimerization with another bHLH protein. Heterodimer with TCF3/E47; the heterodimer is inhibited in presence of ID2, but not NR0B2, to E-box element. Interacts with EP300; the interaction is inhibited by NR0B2. Interacts with RREB1. Interacts with ATOH8. Post-translationally, in islet cells, phosphorylated on Ser-274 upon glucose stimulation; which may be required for nuclear localization. In activated neurons, phosphorylated on Ser-336; which promotes dendritic growth. Phosphorylated by MAPK1; phosphorylation regulates heterodimerization and DNA-binding activities. Phosphorylation on Ser-266 and Ser-274 increases transactivation on the insulin promoter in glucose-stimulated insulinoma cells. Expressed in pancreatic beta cells, pulmonary neuroendocrine cells and retinal interneurons amacrine cells (at protein level). Expressed in endocrine cells of the pancreas. Expressed in the inner layer of cerebellar external granular layer (EGL). Expressed in the Ammon's horn (AH), which includes the CA1-CA3 pyramidal layer and in granule cells of the dentate gyrus (DG). Expressed in photoreceptors of the outer nuclear layer (ONL), in a subset of cells in the lower half of the inner nuclear layer (INL), and in a subset of cells in the ganglion cell layer (GCL) of the retina. Expressed in cholinergic and AII amacrine cell types. Expressed in differentiating neurons of both the central and peripheral nervous systems.

Its subcellular location is the cytoplasm. The protein localises to the nucleus. Acts as a transcriptional activator: mediates transcriptional activation by binding to E box-containing promoter consensus core sequences 5'-CANNTG-3'. Associates with the p300/CBP transcription coactivator complex to stimulate transcription of the secretin gene as well as the gene encoding the cyclin-dependent kinase inhibitor CDKN1A. Contributes to the regulation of several cell differentiation pathways, like those that promote the formation of early retinal ganglion cells, inner ear sensory neurons, granule cells forming either the cerebellum or the dentate gyrus cell layer of the hippocampus, endocrine islet cells of the pancreas and enteroendocrine cells of the small intestine. Together with PAX6 or SIX3, is required for the regulation of amacrine cell fate specification. Also required for dendrite morphogenesis and maintenance in the cerebellar cortex. Associates with chromatin to enhancer regulatory elements in genes encoding key transcriptional regulators of neurogenesis. The chain is Neurogenic differentiation factor 1 (Neurod1) from Mus musculus (Mouse).